A 396-amino-acid chain; its full sequence is Chorismate synthase (396 aa).

Positions 41 and 47 each coordinate NADP(+). FMN contacts are provided by residues 130-132 (RAS), glycine 298, 313-317 (KPIPT), and arginine 339.

The protein belongs to the chorismate synthase family. Homotetramer. FMNH2 is required as a cofactor.

The catalysed reaction is 5-O-(1-carboxyvinyl)-3-phosphoshikimate = chorismate + phosphate. Its pathway is metabolic intermediate biosynthesis; chorismate biosynthesis; chorismate from D-erythrose 4-phosphate and phosphoenolpyruvate: step 7/7. Functionally, catalyzes the anti-1,4-elimination of the C-3 phosphate and the C-6 proR hydrogen from 5-enolpyruvylshikimate-3-phosphate (EPSP) to yield chorismate, which is the branch point compound that serves as the starting substrate for the three terminal pathways of aromatic amino acid biosynthesis. This reaction introduces a second double bond into the aromatic ring system. This Syntrophomonas wolfei subsp. wolfei (strain DSM 2245B / Goettingen) protein is Chorismate synthase.